A 467-amino-acid polypeptide reads, in one-letter code: uncharacterized protein (467 aa).

9 Sel1-like repeats span residues 38-73 (PAAA…EQGH), 107-138 (PEAQ…KNNN), 139-172 (PHGQ…AQGL), 173-208 (PEAH…QQGY), 240-275 (PDAH…AERH), 276-311 (PEGL…EAGS), 343-378 (AERL…ELGH), 379-414 (SKAQ…AKKD), and 415-450 (SMAF…NNGY).

This is an uncharacterized protein from Neisseria meningitidis serogroup B (strain ATCC BAA-335 / MC58).